The chain runs to 278 residues: Large ribosomal subunit protein uL2 (278 aa).

2 disordered regions span residues 1-58 and 224-278; these read MAIR…GGGH and VVMN…GKKR. Positions 23–33 are enriched in basic and acidic residues; that stretch reads EITRDHPEKSL. Residues 37–58 are compositionally biased toward basic residues; that stretch reads LHGRGGRNAHGRITTRHKGGGH. The segment covering 253-268 has biased composition (basic and acidic residues); sequence PEGRTRKPKKASDKLI. Residues 269-278 are compositionally biased toward basic residues; sequence VRRRRTGKKR.

The protein belongs to the universal ribosomal protein uL2 family. In terms of assembly, part of the 50S ribosomal subunit. Forms a bridge to the 30S subunit in the 70S ribosome.

One of the primary rRNA binding proteins. Required for association of the 30S and 50S subunits to form the 70S ribosome, for tRNA binding and peptide bond formation. It has been suggested to have peptidyltransferase activity; this is somewhat controversial. Makes several contacts with the 16S rRNA in the 70S ribosome. This chain is Large ribosomal subunit protein uL2, found in Mycolicibacterium vanbaalenii (strain DSM 7251 / JCM 13017 / BCRC 16820 / KCTC 9966 / NRRL B-24157 / PYR-1) (Mycobacterium vanbaalenii).